A 33-amino-acid polypeptide reads, in one-letter code: Brevinin-2 (33 aa).

Cys27 and Cys33 form a disulfide bridge.

This sequence belongs to the frog skin active peptide (FSAP) family. Brevinin subfamily. As to expression, expressed by the skin glands.

The protein resides in the secreted. Shows antibacterial activity against representative Gram-negative and Gram-positive bacterial species, and a very high hemolytic activity. This Pelophylax porosus brevipodus (Nagoya Daruma pond frog) protein is Brevinin-2.